A 582-amino-acid polypeptide reads, in one-letter code: MGDVLISDRPPSPARLSHTSEKHPRVTLTELNVLRRHRELCDVVINVSGRKIFAHRVILSACSPYFRAMFTGELEESRQTEVTIRDIDENAMELLIDFCYTSHIVVEESNVQTLLPAACLLQLAEIQDICCEFLKRQLDPTNCLGIRAFADTHSCRELLRIADKFTQHNFQEVMESEEFLLLPVGQLVDIICSDELNVRSEEQVFNAVMAWLKYNVAERRQHLAQVLQHVRMPLLSPKFLVGTVGSDLLVRSDEACRDLVDEAKNYLLLPQERPLMQGPRTRPRKPTRRGEVLFAVGGWCSGDAIASVERFDPETADWKMVAPMSKRRCGVGVAVLNDLLYAVGGHDGQSYLNSIERYDPQTNQWSCDVAPTTSCRTSVGVAVLDGFLYAVGGQDGVQCLNHVERYDPKENKWSKVAPMTTRRLGVAVAVLGGYLYAIGGSDGQCPLNTVERYDPRQNKWCAVSPMSTRRKHLGCAVFNNFIYAVGGRDDCMELSSAERYNPHTNSWSPIVAMTSRRSGVGLAVVNGQLYAVGGFDGTAYLKTIEVYDPETNQWRLCGCMNYRRLGGGVGVMRAPQTENYMW.

Positions methionine 1–lysine 22 are disordered. Positions cysteine 41–glutamate 108 constitute a BTB domain. The region spanning cysteine 143–glycine 245 is the BACK domain. Kelch repeat units follow at residues valine 292 to aspartate 338, leucine 340 to glycine 386, phenylalanine 387 to glycine 433, leucine 435 to asparagine 480, isoleucine 482 to glycine 527, and glutamine 528 to alanine 574.

It functions in the pathway protein modification; protein ubiquitination. In terms of biological role, probable substrate-specific adapter of an E3 ubiquitin-protein ligase complex which mediates the ubiquitination and subsequent proteasomal degradation of target proteins. May have a role in synapse differentiation and growth. This is Kelch-like protein diablo from Culex quinquefasciatus (Southern house mosquito).